Consider the following 477-residue polypeptide: Small ribosomal subunit protein uS5m (477 aa).

This sequence belongs to the universal ribosomal protein uS5 family. Component of the mitochondrial small ribosomal subunit (mt-SSU). Mature N.crassa 74S mitochondrial ribosomes consist of a small (37S) and a large (54S) subunit. The 37S small subunit contains a 16S ribosomal RNA (16S mt-rRNA) and 32 different proteins. The 54S large subunit contains a 23S rRNA (23S mt-rRNA) and 42 different proteins. uS3m, uS4m and uS5m form the narrow entry site of the mRNA channel.

Its subcellular location is the mitochondrion. Component of the mitochondrial ribosome (mitoribosome), a dedicated translation machinery responsible for the synthesis of mitochondrial genome-encoded proteins, including at least some of the essential transmembrane subunits of the mitochondrial respiratory chain. The mitoribosomes are attached to the mitochondrial inner membrane and translation products are cotranslationally integrated into the membrane. The polypeptide is Small ribosomal subunit protein uS5m (mrps5) (Neurospora crassa (strain ATCC 24698 / 74-OR23-1A / CBS 708.71 / DSM 1257 / FGSC 987)).